The chain runs to 316 residues: Olfactory receptor 2H1 (316 aa).

Residues 1-23 (MVNQSSPMGFLLLGFSEHPALER) are Extracellular-facing. An N-linked (GlcNAc...) asparagine glycan is attached at asparagine 3. Residues 24-47 (TLFVVVFTSYLLTLVGNTLIILLS) form a helical membrane-spanning segment. The Cytoplasmic portion of the chain corresponds to 48–55 (VLYPRLHS). Residues 56-77 (PMYFFLSDLSFLDLCFTTSCVP) form a helical membrane-spanning segment. The Extracellular portion of the chain corresponds to 78–98 (QMLVNLWGPKKTISFLGCSVQ). Cysteine 95 and cysteine 187 are disulfide-bonded. Residues 99 to 118 (LFIFLSLGTTECILLTVMAF) form a helical membrane-spanning segment. Topologically, residues 119–137 (DRYVAVCQPLHYATIIHPR) are cytoplasmic. The helical transmembrane segment at 138–156 (LCWQLASVAWVMSLVQSIV) threads the bilayer. At 157–193 (QTPSTLHLPFCPHQQIDDFLCEVPSLIRLSCGDTSYN) the chain is on the extracellular side. The helical transmembrane segment at 194–217 (EIQLAVSSVIFVVVPLSLILASYG) threads the bilayer. Over 218 to 234 (ATAQAVLRINSATAWRK) the chain is Cytoplasmic. A helical membrane pass occupies residues 235–257 (AFGTCSSHLTVVTLFYSSVIAVY). The Extracellular portion of the chain corresponds to 258–270 (LQPKNPYAQGRGK). The chain crosses the membrane as a helical span at residues 271–290 (FFGLFYAVGTPSLNPLVYTL). Residues 291 to 316 (RNKEIKRALRRLLGKERDSRESWRAA) are Cytoplasmic-facing.

The protein belongs to the G-protein coupled receptor 1 family.

The protein localises to the cell membrane. Odorant receptor. The protein is Olfactory receptor 2H1 (OR2H1) of Homo sapiens (Human).